A 118-amino-acid chain; its full sequence is Small ribosomal subunit protein uS13 (118 aa).

The disordered stretch occupies residues 94–118 (GLPVRGQRTKTNARTRKGPRKPIKK).

This sequence belongs to the universal ribosomal protein uS13 family. Part of the 30S ribosomal subunit. Forms a loose heterodimer with protein S19. Forms two bridges to the 50S subunit in the 70S ribosome.

Located at the top of the head of the 30S subunit, it contacts several helices of the 16S rRNA. In the 70S ribosome it contacts the 23S rRNA (bridge B1a) and protein L5 of the 50S subunit (bridge B1b), connecting the 2 subunits; these bridges are implicated in subunit movement. Contacts the tRNAs in the A and P-sites. The protein is Small ribosomal subunit protein uS13 of Tolumonas auensis (strain DSM 9187 / NBRC 110442 / TA 4).